Consider the following 214-residue polypeptide: Ependymin (214 aa).

Positions 1 to 20 (MHTVKLLCVVFSCLCAVAWA) are cleaved as a signal peptide. Residues asparagine 70 and asparagine 93 are each glycosylated (N-linked (GlcNAc...) asparagine).

It belongs to the ependymin family. In terms of assembly, forms disulfide-linked dimers. Binds calcium through the terminal sialic acids.

Its subcellular location is the secreted. Functionally, may play a role in neural plasticity. May be involved during axon regeneration. This is Ependymin (epd) from Notemigonus crysoleucas (Golden shiner).